A 314-amino-acid polypeptide reads, in one-letter code: Inositol oxygenase 5 (314 aa).

Residues Arg-54 and 112-114 (DES) each bind substrate. His-125, His-150, and Asp-151 together coordinate Fe cation. Residues Lys-154 and 171 to 172 (GD) contribute to the substrate site. Fe cation contacts are provided by His-223, His-249, and Asp-282. 249–250 (HS) provides a ligand contact to substrate.

This sequence belongs to the myo-inositol oxygenase family. Fe cation serves as cofactor. In terms of tissue distribution, expressed in flowers and siliques.

The protein resides in the cytoplasm. The enzyme catalyses myo-inositol + O2 = D-glucuronate + H2O + H(+). The protein operates within polyol metabolism; myo-inositol degradation into D-glucuronate; D-glucuronate from myo-inositol: step 1/1. Its function is as follows. Involved in the biosynthesis of UDP-glucuronic acid (UDP-GlcA), providing nucleotide sugars for cell-wall polymers. May be also involved in plant ascorbate biosynthesis. This chain is Inositol oxygenase 5 (MIOX5), found in Arabidopsis thaliana (Mouse-ear cress).